Reading from the N-terminus, the 447-residue chain is Tubulin beta chain (447 aa).

GTP-binding residues include Q11, E69, S138, G142, T143, G144, N204, and N226. Position 69 (E69) interacts with Mg(2+). The tract at residues 424–447 (QYQEASVSEGEEEYDEEAPLEGEE) is disordered. The segment covering 432–447 (EGEEEYDEEAPLEGEE) has biased composition (acidic residues).

This sequence belongs to the tubulin family. As to quaternary structure, dimer of alpha and beta chains. A typical microtubule is a hollow water-filled tube with an outer diameter of 25 nm and an inner diameter of 15 nM. Alpha-beta heterodimers associate head-to-tail to form protofilaments running lengthwise along the microtubule wall with the beta-tubulin subunit facing the microtubule plus end conferring a structural polarity. Microtubules usually have 13 protofilaments but different protofilament numbers can be found in some organisms and specialized cells. Requires Mg(2+) as cofactor.

The protein resides in the cytoplasm. It is found in the cytoskeleton. Tubulin is the major constituent of microtubules, a cylinder consisting of laterally associated linear protofilaments composed of alpha- and beta-tubulin heterodimers. Microtubules grow by the addition of GTP-tubulin dimers to the microtubule end, where a stabilizing cap forms. Below the cap, tubulin dimers are in GDP-bound state, owing to GTPase activity of alpha-tubulin. The protein is Tubulin beta chain (TUB1) of Cercospora beticola (Sugarbeet leaf spot fungus).